Consider the following 315-residue polypeptide: ATP synthase gamma chain (315 aa).

This sequence belongs to the ATPase gamma chain family. F-type ATPases have 2 components, CF(1) - the catalytic core - and CF(0) - the membrane proton channel. CF(1) has five subunits: alpha(3), beta(3), gamma(1), delta(1), epsilon(1). CF(0) has three main subunits: a, b and c.

It is found in the cellular thylakoid membrane. Functionally, produces ATP from ADP in the presence of a proton gradient across the membrane. The gamma chain is believed to be important in regulating ATPase activity and the flow of protons through the CF(0) complex. The chain is ATP synthase gamma chain from Cyanothece sp. (strain PCC 7425 / ATCC 29141).